The chain runs to 223 residues: Ribose-5-phosphate isomerase A (223 aa).

Substrate is bound by residues Thr26–Thr29, Asp82–Asp85, and Lys95–Gly98. Catalysis depends on Glu104, which acts as the Proton acceptor. Lys122 contacts substrate.

Belongs to the ribose 5-phosphate isomerase family. As to quaternary structure, homodimer.

The enzyme catalyses aldehydo-D-ribose 5-phosphate = D-ribulose 5-phosphate. It functions in the pathway carbohydrate degradation; pentose phosphate pathway; D-ribose 5-phosphate from D-ribulose 5-phosphate (non-oxidative stage): step 1/1. Its function is as follows. Catalyzes the reversible conversion of ribose-5-phosphate to ribulose 5-phosphate. In Streptococcus agalactiae serotype V (strain ATCC BAA-611 / 2603 V/R), this protein is Ribose-5-phosphate isomerase A.